Here is a 343-residue protein sequence, read N- to C-terminus: Heme A synthase (343 aa).

8 consecutive transmembrane segments (helical) span residues 13–33 (VAIW…VGGA), 96–116 (HRLL…VFLI), 130–150 (AMLG…SSGL), 161–181 (LMTH…TALD), 197–217 (GWAL…ALVA), 258–278 (FNHR…VVLA), 294–314 (AVAA…MAAV), and 318–338 (LGVL…AFAW). His-260 lines the heme pocket. Residue His-322 participates in heme binding.

This sequence belongs to the COX15/CtaA family. Type 2 subfamily. In terms of assembly, interacts with CtaB. Heme b serves as cofactor.

The protein resides in the cell membrane. The catalysed reaction is Fe(II)-heme o + 2 A + H2O = Fe(II)-heme a + 2 AH2. The protein operates within porphyrin-containing compound metabolism; heme A biosynthesis; heme A from heme O: step 1/1. Catalyzes the conversion of heme O to heme A by two successive hydroxylations of the methyl group at C8. The first hydroxylation forms heme I, the second hydroxylation results in an unstable dihydroxymethyl group, which spontaneously dehydrates, resulting in the formyl group of heme A. In Caulobacter vibrioides (strain ATCC 19089 / CIP 103742 / CB 15) (Caulobacter crescentus), this protein is Heme A synthase.